The following is a 487-amino-acid chain: Bifunctional protein GlmU (487 aa).

Residues Met-1–Arg-240 are pyrophosphorylase. Residues Leu-12–Gly-15, Lys-26, Gln-83, and Gly-88–Thr-89 each bind UDP-N-acetyl-alpha-D-glucosamine. Asp-113 is a Mg(2+) binding site. Residues Gly-150, Glu-165, Asn-180, and Asn-238 each contribute to the UDP-N-acetyl-alpha-D-glucosamine site. A Mg(2+)-binding site is contributed by Asn-238. Residues Val-241–Gly-261 form a linker region. The interval Gly-262–Asn-487 is N-acetyltransferase. Residues Arg-343 and Lys-361 each contribute to the UDP-N-acetyl-alpha-D-glucosamine site. His-373 acts as the Proton acceptor in catalysis. Residues Tyr-376 and Asn-387 each coordinate UDP-N-acetyl-alpha-D-glucosamine. Residues Ala-390, Asn-396–Tyr-397, Ser-415, and Ala-433 contribute to the acetyl-CoA site. The tract at residues Ser-449 to Asn-487 is disordered.

This sequence in the N-terminal section; belongs to the N-acetylglucosamine-1-phosphate uridyltransferase family. It in the C-terminal section; belongs to the transferase hexapeptide repeat family. As to quaternary structure, homotrimer. It depends on Mg(2+) as a cofactor.

Its subcellular location is the cytoplasm. The enzyme catalyses alpha-D-glucosamine 1-phosphate + acetyl-CoA = N-acetyl-alpha-D-glucosamine 1-phosphate + CoA + H(+). It carries out the reaction N-acetyl-alpha-D-glucosamine 1-phosphate + UTP + H(+) = UDP-N-acetyl-alpha-D-glucosamine + diphosphate. It functions in the pathway nucleotide-sugar biosynthesis; UDP-N-acetyl-alpha-D-glucosamine biosynthesis; N-acetyl-alpha-D-glucosamine 1-phosphate from alpha-D-glucosamine 6-phosphate (route II): step 2/2. Its pathway is nucleotide-sugar biosynthesis; UDP-N-acetyl-alpha-D-glucosamine biosynthesis; UDP-N-acetyl-alpha-D-glucosamine from N-acetyl-alpha-D-glucosamine 1-phosphate: step 1/1. It participates in bacterial outer membrane biogenesis; LPS lipid A biosynthesis. Functionally, catalyzes the last two sequential reactions in the de novo biosynthetic pathway for UDP-N-acetylglucosamine (UDP-GlcNAc). The C-terminal domain catalyzes the transfer of acetyl group from acetyl coenzyme A to glucosamine-1-phosphate (GlcN-1-P) to produce N-acetylglucosamine-1-phosphate (GlcNAc-1-P), which is converted into UDP-GlcNAc by the transfer of uridine 5-monophosphate (from uridine 5-triphosphate), a reaction catalyzed by the N-terminal domain. The polypeptide is Bifunctional protein GlmU (Corynebacterium aurimucosum (strain ATCC 700975 / DSM 44827 / CIP 107346 / CN-1) (Corynebacterium nigricans)).